The primary structure comprises 1242 residues: Insulin receptor substrate 1 (1242 aa).

S3 is subject to Phosphoserine. Residues 3–137 (SPPESDGFSD…GAGGGGGSCS (135 aa)) are mediates interaction with PHIP. The region spanning 12–115 (DVRKVGYLRK…WYQALLQLHN (104 aa)) is the PH domain. S99 is subject to Phosphoserine; by CK2. Residues 160-264 (FKEVWQVILK…EAMRAMSDEF (105 aa)) form the IRS-type PTB domain. The interval 262–430 (DEFRPRSKSQ…SDGGFISSDE (169 aa)) is disordered. Positions 269 to 281 (KSQSSSNCSNPIS) are enriched in low complexity. Residues S270 and S307 each carry the phosphoserine; by RPS6KB1 modification. At S312 the chain carries Phosphoserine; by IKKB, MAPK8 and RPS6KB1. Residues S315, S323, S330, S345, and S348 each carry the phosphoserine modification. A compositionally biased stretch (basic residues) spans 354-363 (THAHRHRGSA). Composition is skewed to low complexity over residues 383–404 (SPSATSPVSLSSSSTSGHGSTS) and 412–424 (SSASVSGSPSDGG). Position 419 is a phosphoserine (S419). 2 positions are modified to phosphothreonine: T446 and T453. At Y465 the chain carries Phosphotyrosine; by INSR. A YXXM motif 1 motif is present at residues 465–468 (YICM). The residue at position 527 (S527) is a Phosphoserine; by RPS6KB1. The short motif at 551 to 554 (YTEM) is the YXXM motif 2 element. Residues 592-610 (LERRGGHHRPDSSTLHTDD) show a composition bias toward basic and acidic residues. Residues 592 to 616 (LERRGGHHRPDSSTLHTDDGYMPMS) are disordered. Y612 carries the post-translational modification Phosphotyrosine; by INSR. The short motif at 612–615 (YMPM) is the YXXM motif 3 element. Residues S616 and S629 each carry the phosphoserine modification. Y632 carries the post-translational modification Phosphotyrosine; by INSR. The YXXM motif 4 motif lies at 632–635 (YMPM). S636 is subject to Phosphoserine; by RPS6KB1. Y662 is modified (phosphotyrosine). The YXXM motif 5 motif lies at 662–665 (YMMM). Residues 668–693 (SGGCSPDIGGGPSSSSSSSNAVPSGT) are disordered. Residues 732 to 735 (YMNM) carry the YXXM motif 6 motif. Disordered regions lie at residues 771-900 (FKHT…VNIE) and 918-937 (SPSVRCPSQLQPAPREEETG). Over residues 776-785 (RPGEPEEGAR) the composition is skewed to basic and acidic residues. S794 carries the post-translational modification Phosphoserine; by AMPK and SIK2. Residues 801–815 (AATADDSSSSTSSDS) are compositionally biased toward low complexity. The residue at position 892 (S892) is a Phosphoserine. Residue Y896 is modified to Phosphotyrosine; by INSR. Residues 896–898 (YVN) form a GRB2-binding region. The span at 918-928 (SPSVRCPSQLQ) shows a compositional bias: polar residues. 2 positions are modified to phosphotyrosine; by INSR: Y941 and Y989. 3 short sequence motifs (YXXM motif) span residues 941–944 (YMKM), 989–992 (YMTM), and 1012–1015 (YADM). A disordered region spans residues 1057–1146 (SSLLGGPQGP…DVKRHSSASF (90 aa)). Over residues 1073–1085 (TRVNLSPNRNQSA) the composition is skewed to polar residues. S1100 is modified (phosphoserine). Residue S1101 is modified to Phosphoserine; by RPS6KB1 and PKC/PRKCQ. Over residues 1102-1114 (ETFSSTPSATRVG) the composition is skewed to polar residues. Position 1179 is a phosphotyrosine; by INSR (Y1179). Glycyl lysine isopeptide (Lys-Gly) (interchain with G-Cter in ubiquitin) cross-links involve residues K1186 and K1189. A disordered region spans residues 1190–1242 (QCPQECTPEPQPPPPPPPHQPLGSGESSSTRRSSEDLSAYASISFQKQPEDRQ). Residues 1198–1209 (EPQPPPPPPPHQ) are compositionally biased toward pro residues. A compositionally biased stretch (low complexity) spans 1210 to 1220 (PLGSGESSSTR). At Y1229 the chain carries Phosphotyrosine; by INSR.

Interacts with UBTF and PIK3CA. Interacts (via phosphorylated YXXM motifs) with PIK3R1. Interacts with ROCK1 and FER. Interacts (via PH domain) with PHIP. Interacts with GRB2. Interacts with SOCS7. Interacts (via IRS-type PTB domain) with IGF1R and INSR (via the tyrosine-phosphorylated NPXY motif). Interacts with ALK. Interacts with EIF2AK2/PKR. Interacts with GKAP1. Interacts with DGKZ in the absence of insulin; insulin stimulation decreases this interaction. Found in a ternary complex with DGKZ and PIP5K1A in the absence of insulin stimulation. Interacts with SQSTM1; the interaction is disrupted by the presence of tensin TNS2. Interacts with NCK1 (via SH2 domain). Interacts with NCK2 (via SH3 domain). Interacts with SH2B1; this interaction enhances leptin-induced activation of the PI3-kinase pathway. Interacts with DVL2; this interaction promotes the Wnt/beta-catenin signaling pathway. Serine phosphorylation of IRS1 is a mechanism for insulin resistance. Ser-307, Ser-312, Ser-315, and Ser-323 phosphorylations inhibit insulin action through disruption of IRS1 interaction with the insulin receptor INSR. Phosphorylation of Tyr-896 is required for GRB2-binding. Phosphorylated by ALK. Phosphorylated at Ser-270, Ser-307, Ser-636 and Ser-1101 by RPS6KB1; phosphorylation induces accelerated degradation of IRS1. Phosphorylated on tyrosine residues in response to insulin. In skeletal muscles, dephosphorylated on Tyr-612 by TNS2 under anabolic conditions; dephosphorylation results in the proteasomal degradation of IRS1. Post-translationally, ubiquitinated by the Cul7-RING(FBXW8) complex in a mTOR-dependent manner, leading to its degradation: the Cul7-RING(FBXW8) complex recognizes and binds IRS1 previously phosphorylated by S6 kinase (RPS6KB1 or RPS6KB2). Ubiquitinated by TRAF4 through 'Lys-29' linkage; this ubiquitination regulates the interaction of IRS1 with IGFR and IRS1 tyrosine phosphorylation upon IGF1 stimulation. In terms of processing, S-nitrosylation at by BLVRB inhibits its activity.

The protein resides in the cytoplasm. It is found in the nucleus. Functionally, signaling adapter protein that participates in the signal transduction from two prominent receptor tyrosine kinases, insulin receptor/INSR and insulin-like growth factor I receptor/IGF1R. Plays therefore an important role in development, growth, glucose homeostasis as well as lipid metabolism. Upon phosphorylation by the insulin receptor, functions as a signaling scaffold that propagates insulin action through binding to SH2 domain-containing proteins including the p85 regulatory subunit of PI3K, NCK1, NCK2, GRB2 or SHP2. Recruitment of GRB2 leads to the activation of the guanine nucleotide exchange factor SOS1 which in turn triggers the Ras/Raf/MEK/MAPK signaling cascade. Activation of the PI3K/AKT pathway is responsible for most of insulin metabolic effects in the cell, and the Ras/Raf/MEK/MAPK is involved in the regulation of gene expression and in cooperation with the PI3K pathway regulates cell growth and differentiation. Acts a positive regulator of the Wnt/beta-catenin signaling pathway through suppression of DVL2 autophagy-mediated degradation leading to cell proliferation. This chain is Insulin receptor substrate 1 (IRS1), found in Homo sapiens (Human).